Consider the following 250-residue polypeptide: Probable transcriptional regulatory protein DIP1378 (250 aa).

The tract at residues 1–22 is disordered; sequence MSGHSKWATTKHKKAANDAKRG.

Belongs to the TACO1 family.

Its subcellular location is the cytoplasm. In Corynebacterium diphtheriae (strain ATCC 700971 / NCTC 13129 / Biotype gravis), this protein is Probable transcriptional regulatory protein DIP1378.